The following is a 407-amino-acid chain: [Pyruvate dehydrogenase (acetyl-transferring)] kinase isozyme 2, mitochondrial (407 aa).

Residues 135-364 form the Histidine kinase domain; that stretch reads LEYKDTYGDD…DAVIYLKALS (230 aa). A phosphotyrosine mark is found at Tyr215 and Tyr216. ATP is bound by residues 251–258, Asp290, 309–310, and 325–330; these read ELFKNAMR, ST, and GFGYGL. Lys376 carries the N6-succinyllysine modification.

The protein belongs to the PDK/BCKDK protein kinase family. In terms of assembly, homodimer, and heterodimer with PDK1. Interacts with the pyruvate dehydrogenase complex subunit DLAT, and is part of the multimeric pyruvate dehydrogenase complex that contains multiple copies of pyruvate dehydrogenase (E1), dihydrolipoamide acetyltransferase (DLAT, E2) and lipoamide dehydrogenase (DLD, E3). As to expression, detected in heart (at protein level).

The protein localises to the mitochondrion matrix. It carries out the reaction L-seryl-[pyruvate dehydrogenase E1 alpha subunit] + ATP = O-phospho-L-seryl-[pyruvate dehydrogenase E1 alpha subunit] + ADP + H(+). Its function is as follows. Kinase that plays a key role in the regulation of glucose and fatty acid metabolism and homeostasis via phosphorylation of the pyruvate dehydrogenase subunits PDHA1 and PDHA2. This inhibits pyruvate dehydrogenase activity, and thereby regulates metabolite flux through the tricarboxylic acid cycle, down-regulates aerobic respiration and inhibits the formation of acetyl-coenzyme A from pyruvate. Inhibition of pyruvate dehydrogenase decreases glucose utilization and increases fat metabolism. Mediates cellular responses to insulin. Plays an important role in maintaining normal blood glucose levels and in metabolic adaptation to nutrient availability. Via its regulation of pyruvate dehydrogenase activity, plays an important role in maintaining normal blood pH and in preventing the accumulation of ketone bodies under starvation. Plays a role in the regulation of cell proliferation and in resistance to apoptosis under oxidative stress. Plays a role in p53/TP53-mediated apoptosis. This is [Pyruvate dehydrogenase (acetyl-transferring)] kinase isozyme 2, mitochondrial (Pdk2) from Mus musculus (Mouse).